The primary structure comprises 475 residues: Glutamate--tRNA ligase (475 aa).

Positions 8–18 (PSPTGTLHIGT) match the 'HIGH' region motif. The 'KMSKS' region motif lies at 247–251 (KLSKR). K250 provides a ligand contact to ATP.

Belongs to the class-I aminoacyl-tRNA synthetase family. Glutamate--tRNA ligase type 1 subfamily. Monomer.

The protein localises to the cytoplasm. It catalyses the reaction tRNA(Glu) + L-glutamate + ATP = L-glutamyl-tRNA(Glu) + AMP + diphosphate. In terms of biological role, catalyzes the attachment of glutamate to tRNA(Glu) in a two-step reaction: glutamate is first activated by ATP to form Glu-AMP and then transferred to the acceptor end of tRNA(Glu). In Synechococcus sp. (strain RCC307), this protein is Glutamate--tRNA ligase.